The primary structure comprises 101 residues: Large ribosomal subunit protein uL24 (101 aa).

It belongs to the universal ribosomal protein uL24 family. In terms of assembly, part of the 50S ribosomal subunit.

Functionally, one of two assembly initiator proteins, it binds directly to the 5'-end of the 23S rRNA, where it nucleates assembly of the 50S subunit. Its function is as follows. One of the proteins that surrounds the polypeptide exit tunnel on the outside of the subunit. The polypeptide is Large ribosomal subunit protein uL24 (Streptococcus sanguinis (strain SK36)).